The following is a 565-amino-acid chain: Thiol:disulfide interchange protein DsbD (565 aa).

A signal peptide spans 1–19; the sequence is MAQRIFTLILLLCSTSVFA. Intrachain disulfides connect cysteine 122-cysteine 128 and cysteine 182-cysteine 304. 7 helical membrane-spanning segments follow: residues 163 to 183, 208 to 228, 243 to 263, 289 to 309, 323 to 343, 357 to 377, and 384 to 404; these read LPFS…TPCV, LLTF…GLVV, YVLI…FGLF, GVFI…TAPL, WLGG…LMLI, WMEQ…VFLL, and IWGL…AFIT. In terms of domain architecture, Thioredoxin spans 434–565; sequence WAFGATHTAQ…FSAHLRDRQP (132 aa). Cysteine 480 and cysteine 483 are disulfide-bonded.

This sequence belongs to the thioredoxin family. DsbD subfamily.

The protein localises to the cell inner membrane. It catalyses the reaction [protein]-dithiol + NAD(+) = [protein]-disulfide + NADH + H(+). It carries out the reaction [protein]-dithiol + NADP(+) = [protein]-disulfide + NADPH + H(+). Required to facilitate the formation of correct disulfide bonds in some periplasmic proteins and for the assembly of the periplasmic c-type cytochromes. Acts by transferring electrons from cytoplasmic thioredoxin to the periplasm. This transfer involves a cascade of disulfide bond formation and reduction steps. The protein is Thiol:disulfide interchange protein DsbD of Escherichia coli O6:H1 (strain CFT073 / ATCC 700928 / UPEC).